The chain runs to 523 residues: Cytokinin dehydrogenase 3 (523 aa).

An N-terminal signal peptide occupies residues 1-31 (MASYNLRSQVRLIAITIVIIITLSTPITTNT). The FAD-binding PCMH-type domain maps to 66 to 243 (TKIFPSAVLI…TRARIKLEVA (178 aa)). FAD is bound by residues A100, G102, and G104. Residue H105 is modified to Pros-8alpha-FAD histidine. Positions 106 and 110 each coordinate FAD. The N-linked (GlcNAc...) asparagine glycan is linked to N153. FAD contacts are provided by D167, T172, S178, I182, and I233. N408 carries N-linked (GlcNAc...) asparagine glycosylation. Residues Y476, S511, and Q514 each coordinate FAD.

The protein belongs to the oxygen-dependent FAD-linked oxidoreductase family. FAD is required as a cofactor. Very weak expression in the young shoot tissues around two weeks after germination. Present in the center of the floral meristem and the boundary between long stamen primordia and gynoecial primordia.

It localises to the endoplasmic reticulum. Its subcellular location is the vacuole. It catalyses the reaction N(6)-dimethylallyladenine + A + H2O = 3-methyl-2-butenal + adenine + AH2. In terms of biological role, catalyzes the oxidation of cytokinins, a family of N(6)-substituted adenine derivatives that are plant hormones, where the substituent is an isopentenyl group. Catalyzes in vitro the oxidation of various types of cytokinin nucleotides that are known as direct products of cytokinin biosynthesis. In association with CKX5 regulates the activity of the reproductive meristems, flower organ size and ovule formation. In Arabidopsis thaliana (Mouse-ear cress), this protein is Cytokinin dehydrogenase 3 (CKX3).